The following is an 86-amino-acid chain: Large ribosomal subunit protein bL31B (86 aa).

Belongs to the bacterial ribosomal protein bL31 family. Type B subfamily. As to quaternary structure, part of the 50S ribosomal subunit.

The sequence is that of Large ribosomal subunit protein bL31B from Vibrio vulnificus (strain CMCP6).